The following is a 309-amino-acid chain: Dihydroorotate dehydrogenase B (NAD(+)), catalytic subunit (309 aa).

Residues S21 and 45-46 each bind FMN; that span reads KA. Substrate is bound by residues K45 and 69 to 73; that span reads NAIGL. Positions 99 and 127 each coordinate FMN. Substrate is bound at residue N127. C130 acts as the Nucleophile in catalysis. FMN is bound by residues K165 and I191. 192–193 is a binding site for substrate; sequence NT. FMN-binding positions include G217, 243–244, and 265–266; these read GG and GT.

It belongs to the dihydroorotate dehydrogenase family. Type 1 subfamily. In terms of assembly, heterotetramer of 2 PyrK and 2 PyrD type B subunits. FMN is required as a cofactor.

Its subcellular location is the cytoplasm. The enzyme catalyses (S)-dihydroorotate + NAD(+) = orotate + NADH + H(+). Its pathway is pyrimidine metabolism; UMP biosynthesis via de novo pathway; orotate from (S)-dihydroorotate (NAD(+) route): step 1/1. Catalyzes the conversion of dihydroorotate to orotate with NAD(+) as electron acceptor. In Bacillus cereus (strain B4264), this protein is Dihydroorotate dehydrogenase B (NAD(+)), catalytic subunit (pyrD).